The following is a 435-amino-acid chain: D-amino acid dehydrogenase (435 aa).

Residue 3-17 coordinates FAD; it reads VLILGSGVIGTTSAW.

It belongs to the DadA oxidoreductase family. FAD serves as cofactor.

It carries out the reaction a D-alpha-amino acid + A + H2O = a 2-oxocarboxylate + AH2 + NH4(+). The protein operates within amino-acid degradation; D-alanine degradation; NH(3) and pyruvate from D-alanine: step 1/1. Oxidative deamination of D-amino acids. The chain is D-amino acid dehydrogenase from Xylella fastidiosa (strain 9a5c).